The sequence spans 141 residues: UPF0179 protein Cmaq_1008 (141 aa).

The protein belongs to the UPF0179 family.

The sequence is that of UPF0179 protein Cmaq_1008 from Caldivirga maquilingensis (strain ATCC 700844 / DSM 13496 / JCM 10307 / IC-167).